The primary structure comprises 111 residues: MEIEKTNRMNTLFEFYATLLTDKQMNYIELYYADDYSLAEIAEEFNISRQAVYDNIKRTEKVLESYEEKLHLFSNYVVRNQLLEELMKKYSTDQYLITKLQEIQQIDEEEF.

The protein belongs to the UPF0122 family.

Functionally, might take part in the signal recognition particle (SRP) pathway. This is inferred from the conservation of its genetic proximity to ftsY/ffh. May be a regulatory protein. The protein is UPF0122 protein YofM (yofM) of Lactococcus lactis subsp. lactis (strain IL1403) (Streptococcus lactis).